We begin with the raw amino-acid sequence, 287 residues long: Pyridoxal kinase PdxY (287 aa).

Substrate contacts are provided by residues Ser-9 and 44–45 (MQ). Asp-111, Ala-142, Glu-147, and Lys-180 together coordinate ATP. Asp-221 serves as a coordination point for substrate.

The protein belongs to the pyridoxine kinase family. PdxY subfamily. Homodimer. It depends on Mg(2+) as a cofactor.

The enzyme catalyses pyridoxal + ATP = pyridoxal 5'-phosphate + ADP + H(+). It functions in the pathway cofactor metabolism; pyridoxal 5'-phosphate salvage; pyridoxal 5'-phosphate from pyridoxal: step 1/1. Its function is as follows. Pyridoxal kinase involved in the salvage pathway of pyridoxal 5'-phosphate (PLP). Catalyzes the phosphorylation of pyridoxal to PLP. This is Pyridoxal kinase PdxY from Burkholderia thailandensis (strain ATCC 700388 / DSM 13276 / CCUG 48851 / CIP 106301 / E264).